Reading from the N-terminus, the 81-residue chain is Defensin-like protein 144 (81 aa).

An N-terminal signal peptide occupies residues 1-24 (MKNSFRFSFTVITTFIICVLVSGA). Cystine bridges form between Cys-30/Cys-74, Cys-42/Cys-61, Cys-47/Cys-69, and Cys-51/Cys-71.

Belongs to the DEFL family.

Its subcellular location is the secreted. The polypeptide is Defensin-like protein 144 (LCR10) (Arabidopsis thaliana (Mouse-ear cress)).